A 449-amino-acid polypeptide reads, in one-letter code: Lysine-sensitive aspartokinase 3 (449 aa).

The tract at residues 2 to 245 (SEIVVSKFGG…AAKRIDEIAF (244 aa)) is aspartokinase. ATP is bound at residue 8-11 (KFGG). Residues Thr-45, Glu-119, and 198 to 201 (RGGS) each bind substrate. ATP contacts are provided by residues 221–222 (TD), Tyr-227, Arg-232, and 257–258 (KV). The segment at 246–449 (AEAAEMATFG…VQKLHSNLFE (204 aa)) is interface. Residues 299–449 (FRALALRRNQ…VQKLHSNLFE (151 aa)) form a required for homodimerization region. The region spanning 313–394 (LHSLNMLHSR…GLALVALIGN (82 aa)) is the ACT domain. L-lysine contacts are provided by residues Met-318, Ser-321, 324–325 (FL), 338–340 (SVD), and 345–346 (SE).

The protein belongs to the aspartokinase family. Homodimer. In the inactive form a homotetramer is formed.

It carries out the reaction L-aspartate + ATP = 4-phospho-L-aspartate + ADP. The protein operates within amino-acid biosynthesis; L-lysine biosynthesis via DAP pathway; (S)-tetrahydrodipicolinate from L-aspartate: step 1/4. Synthesis and activity are sensitive to the allosteric inhibitor lysine, one of the end metabolites of the aspartic acid family branched pathway. The chain is Lysine-sensitive aspartokinase 3 (lysC) from Escherichia coli (strain K12).